Consider the following 1097-residue polypeptide: RecBCD enzyme subunit RecC (1097 aa).

This sequence belongs to the RecC family. In terms of assembly, heterotrimer of RecB, RecC and RecD. All subunits contribute to DNA-binding.

Its function is as follows. A helicase/nuclease that prepares dsDNA breaks (DSB) for recombinational DNA repair. Binds to DSBs and unwinds DNA via a highly rapid and processive ATP-dependent bidirectional helicase activity. Holoenzyme degrades any linearized DNA that is unable to undergo homologous recombination. In the holoenzyme this subunit recognizes the wild-type Chi sequence, and when added to isolated RecB increases its ATP-dependent helicase processivity. Unlike the case in E.coli, suppresses RecA-dependent homologous recombination, is instead required for single-strand annealing pathway repair of DSB. The chain is RecBCD enzyme subunit RecC from Mycobacterium tuberculosis (strain CDC 1551 / Oshkosh).